A 224-amino-acid chain; its full sequence is MNYFRYKQFNKDVITVAVGYYLRYTLSYRDISEILRERGVNVHHSTVYRWVQEYAPILYQIWKKKHKKAYYKWRIDETYIKIKGKWSYLYRAIDAEGHTLDIWLRKQRDNHSAYAFIKRLIKQFGKPQKVITDQAPSTKVAMAKVIKAFKLKPDCHCTSKYLNNLIEQDHRHIKVRKTRYQSINTAKNTLKGIECIYALYKKNRRSLQIYGFSPCHEISIMLAS.

The segment at residues 33-52 (EILRERGVNVHHSTVYRWVQ) is a DNA-binding region (H-T-H motif). Residues 73 to 222 (WRIDETYIKI…SPCHEISIML (150 aa)) form the Integrase catalytic domain.

Its function is as follows. Involved in the transposition of the insertion sequence. This Staphylococcus aureus (strain NCTC 8325 / PS 47) protein is Transposase for insertion sequence-like element IS431mec (tnp).